The sequence spans 616 residues: MPKLRSATTTQGRNMAGARALWRATGMKDGDFDKPIIAVVNSFTQFVPGHVHLKDLGQLVAREIEAAGGVAKEFNTIAVDDGIAMGHGGMLYSLPSRELIADSVEYMINAHCADAMVCISNCDKITPGMLMAAMRLNIPVIFVSGGPMEAGKTKLSDQIIKLDLVDAMIMAADPTVSDEDTAAVERSACPTCGSCSGMFTANSMNCLTEALGLSQPGNGSLLATHADREQLFKSAGHRIVELAKRYYEQDDVTALPRSIATRDAFENAIALDIAMGGSTNTVLHLLAIAQEGDVDFTMADIDRMSRRVPQLCKVAPSTQKYHMEDVHRAGGIVAILGELSRAGLLHTDVRNVLGLSLAELIEKYDVALNPSEEVKKFYSAGPGGIPTTKAFSQDCRWPSLDVDRKEGCIRTKENAYSQDGGLAVLAGNLAIDGCIVKTAGVDESILKFEGPAVVFESQDDAVAGILGGKVKAGDVVIVRYEGPKGGPGMQEMLYPTSYLKSMGLGKVCALITDGRFSGGSSGLSIGHVSPEAAAGGNIGLIADGDLISINIPSRTIDIKISDAELATRRAAMEAKGKAAWKPVNRERFVSFALRAYANLATSADKGAVRDRSKLGE.

Aspartate 81 is a Mg(2+) binding site. Cysteine 122 contacts [2Fe-2S] cluster. Mg(2+) contacts are provided by aspartate 123 and lysine 124. Residue lysine 124 is modified to N6-carboxylysine. [2Fe-2S] cluster is bound at residue cysteine 195. Glutamate 491 is a Mg(2+) binding site. Serine 517 acts as the Proton acceptor in catalysis.

It belongs to the IlvD/Edd family. As to quaternary structure, homodimer. The cofactor is [2Fe-2S] cluster. Requires Mg(2+) as cofactor.

The catalysed reaction is (2R)-2,3-dihydroxy-3-methylbutanoate = 3-methyl-2-oxobutanoate + H2O. It carries out the reaction (2R,3R)-2,3-dihydroxy-3-methylpentanoate = (S)-3-methyl-2-oxopentanoate + H2O. Its pathway is amino-acid biosynthesis; L-isoleucine biosynthesis; L-isoleucine from 2-oxobutanoate: step 3/4. It functions in the pathway amino-acid biosynthesis; L-valine biosynthesis; L-valine from pyruvate: step 3/4. In terms of biological role, functions in the biosynthesis of branched-chain amino acids. Catalyzes the dehydration of (2R,3R)-2,3-dihydroxy-3-methylpentanoate (2,3-dihydroxy-3-methylvalerate) into 2-oxo-3-methylpentanoate (2-oxo-3-methylvalerate) and of (2R)-2,3-dihydroxy-3-methylbutanoate (2,3-dihydroxyisovalerate) into 2-oxo-3-methylbutanoate (2-oxoisovalerate), the penultimate precursor to L-isoleucine and L-valine, respectively. The protein is Dihydroxy-acid dehydratase of Tolumonas auensis (strain DSM 9187 / NBRC 110442 / TA 4).